A 231-amino-acid polypeptide reads, in one-letter code: Small ribosomal subunit protein uS2 (231 aa).

It belongs to the universal ribosomal protein uS2 family.

This Blochmanniella floridana protein is Small ribosomal subunit protein uS2.